A 414-amino-acid polypeptide reads, in one-letter code: Cyclin-B1-3 (414 aa).

Belongs to the cyclin family. Cyclin AB subfamily. In terms of tissue distribution, expressed in roots, stems and flowers.

The protein is Cyclin-B1-3 (CYCB1-3) of Arabidopsis thaliana (Mouse-ear cress).